Consider the following 149-residue polypeptide: Calmodulin (149 aa).

A2 bears the N-acetylalanine mark. EF-hand domains lie at 8 to 43, 44 to 79, 81 to 116, and 117 to 149; these read EQIA…LGQN, PTEA…KMKE, DSEE…LGEK, and LTDD…MVSK. K14 carries the post-translational modification N6,N6-dimethyllysine. Ca(2+)-binding residues include D21, D23, D25, T27, E32, D57, D59, N61, T63, E68, D94, D96, N98, and E105. At K116 the chain carries N6,N6,N6-trimethyllysine. Ca(2+) is bound by residues D130, D132, D134, H136, and E141.

The protein belongs to the calmodulin family. Post-translationally, the pantophobiac mutant CAM2 is undermethylated on Lys-116.

Calmodulin mediates the control of a large number of enzymes, ion channels and other proteins by Ca(2+). Among the enzymes to be stimulated by the calmodulin-Ca(2+) complex are a number of protein kinases and phosphatases. The protein is Calmodulin (CAM) of Paramecium tetraurelia.